Here is a 158-residue protein sequence, read N- to C-terminus: Transcription elongation factor GreA (158 aa).

A coiled-coil region spans residues 47-74 (AEYHAAKEEQSHNEGRIAELEDKLARAD).

This sequence belongs to the GreA/GreB family.

In terms of biological role, necessary for efficient RNA polymerase transcription elongation past template-encoded arresting sites. The arresting sites in DNA have the property of trapping a certain fraction of elongating RNA polymerases that pass through, resulting in locked ternary complexes. Cleavage of the nascent transcript by cleavage factors such as GreA or GreB allows the resumption of elongation from the new 3'terminus. GreA releases sequences of 2 to 3 nucleotides. This chain is Transcription elongation factor GreA, found in Bradyrhizobium sp. (strain BTAi1 / ATCC BAA-1182).